Consider the following 135-residue polypeptide: T-cell receptor beta chain V region 3H.25 (135 aa).

The N-terminal stretch at 1-20 (MATRLLCYTVLCLLGARILN) is a signal peptide. The v segment stretch occupies residues 21–115 (SKVIQTPRYL…SALYLCASSL (95 aa)). Cys42 and Cys111 are joined by a disulfide. Positions 116–118 (FGT) are d segment. Residues 119 to 135 (SDYTFGSGTRLLVIGKA) form a j segment region.

This chain is T-cell receptor beta chain V region 3H.25, found in Mus musculus (Mouse).